A 350-amino-acid chain; its full sequence is UDP-glucose 4-epimerase 2 (350 aa).

Residues 12–14 (GYI), 33–37 (DNYDN), 63–64 (DL), phenylalanine 85, and lysine 89 each bind NAD(+). Position 129–131 (129–131 (SAT)) interacts with substrate. Tyrosine 153 functions as the Proton acceptor in the catalytic mechanism. Lysine 157 and tyrosine 181 together coordinate NAD(+). Substrate contacts are provided by residues 181-183 (YFN), 202-204 (NNL), 220-222 (TVF), arginine 235, and 297-300 (RPGD).

It belongs to the NAD(P)-dependent epimerase/dehydratase family. Forms homodimers and heterodimers. Requires NAD(+) as cofactor. As to expression, widely expressed. Most highly expressed in stems and flowers.

The protein localises to the cytoplasm. It catalyses the reaction UDP-alpha-D-glucose = UDP-alpha-D-galactose. It participates in carbohydrate metabolism; galactose metabolism. With respect to regulation, enhanced activity by NaCl. Enhanced activity by NAD(+). Strongly inhibited by UDP. Its function is as follows. Catalyzes the interconversion between UDP-glucose and UDP-galactose. Cooperates with UGE3 in pollen development and with UGE4 in cell wall carbohydrate biosynthesis and growth. The chain is UDP-glucose 4-epimerase 2 from Arabidopsis thaliana (Mouse-ear cress).